We begin with the raw amino-acid sequence, 382 residues long: Cell division protein FtsZ (382 aa).

GTP is bound by residues 21–25 (GGGSN), 108–110 (GTG), glutamate 139, arginine 143, and aspartate 187. Residues 322–382 (RAQQQSNFNR…FLRNRRRKSR (61 aa)) form a disordered region. A compositionally biased stretch (basic and acidic residues) spans 340–352 (KSKEKEAEKKEPR).

It belongs to the FtsZ family. As to quaternary structure, homodimer. Polymerizes to form a dynamic ring structure in a strictly GTP-dependent manner. Interacts directly with several other division proteins.

It is found in the cytoplasm. Essential cell division protein that forms a contractile ring structure (Z ring) at the future cell division site. The regulation of the ring assembly controls the timing and the location of cell division. One of the functions of the FtsZ ring is to recruit other cell division proteins to the septum to produce a new cell wall between the dividing cells. Binds GTP and shows GTPase activity. This is Cell division protein FtsZ from Halalkalibacterium halodurans (strain ATCC BAA-125 / DSM 18197 / FERM 7344 / JCM 9153 / C-125) (Bacillus halodurans).